The sequence spans 248 residues: Triosephosphate isomerase (248 aa).

Position 9–11 (9–11) interacts with substrate; it reads NWK. Histidine 94 functions as the Electrophile in the catalytic mechanism. The active-site Proton acceptor is glutamate 166. Residues glycine 172, serine 212, and 233-234 each bind substrate; that span reads GG.

Belongs to the triosephosphate isomerase family. Homodimer.

It is found in the cytoplasm. It catalyses the reaction D-glyceraldehyde 3-phosphate = dihydroxyacetone phosphate. The protein operates within carbohydrate biosynthesis; gluconeogenesis. It functions in the pathway carbohydrate degradation; glycolysis; D-glyceraldehyde 3-phosphate from glycerone phosphate: step 1/1. Its function is as follows. Involved in the gluconeogenesis. Catalyzes stereospecifically the conversion of dihydroxyacetone phosphate (DHAP) to D-glyceraldehyde-3-phosphate (G3P). The protein is Triosephosphate isomerase of Alkaliphilus oremlandii (strain OhILAs) (Clostridium oremlandii (strain OhILAs)).